The primary structure comprises 501 residues: Carotenoid cleavage oxygenase (501 aa).

Residues His-162, His-211, His-314, and His-494 each coordinate Fe cation.

This sequence belongs to the carotenoid oxygenase family. The cofactor is Fe(2+).

In terms of biological role, catalyzes the oxidative cleavage of several carotenoids and apocarotenoids in vitro. The polypeptide is Carotenoid cleavage oxygenase (Mycobacterium tuberculosis (strain CDC 1551 / Oshkosh)).